The primary structure comprises 718 residues: MLFSINKLRDLANLDKQITNDQIIDAINKIGFEVESVKNFLNVSKIKFGLIKKVYKNPNASNLNVCEIEFEDKMRIIQTTAQNVEQNKYIVAFVENSTFGKIKIEAKEIKGTFSQGMLCSLEELGFDKSLIRDEFQDKIFLLDKADLKQDPIDFFDLDDQIVDVSILSNRSDANGYFIMALELSAFFETKTNFEIKNEIFKIHPNLKVDETNTLDFVLIEPQKELKKISLKDQILIMKSNIKTFNDLVDLTNLNLIMNAMPTHVYDKDKISNEISVKKVSQEVSILGNKKISLDNNLVVCSKEKPISIAGVIGIADFGSDQNTKNFVFEIGRFKTLDIQKSIKSVKLDTQSSKLSSKKISSGTFKMALNFLTSYFDSQVLVSKNLKDKKESFNFVWEDLNKFLNTDVKKMPHFNRVLKSLNILGFEFKDNKVYLPTYRHDIEHVQDILEEFLRFYGYENLVFEAPNIKNFETKNYEEYLNFIPYLNYSETRTYSLVSKDKNIFNPFNFKENINLETFHSKEREQIRNSMILSMEEVLQYNLKRKVENVNIFEIGIINNSQRSLALLSNQKSFNRFKEDVESILKDKLYSFEKGGFDFSHPLESIIIKDNDQLIGYIIRANAKDFEEDFVYAEILIDKLRNKKIENKSLNYLPLKTLDINFEVPSENGLFEVYKTLEKNEKIYSYKLIDHYQKNQISIYTIRIWAFEENIEELKTLFNL.

One can recognise a tRNA-binding domain in the interval 40-153; the sequence is FLNVSKIKFG…KADLKQDPID (114 aa). Residues 387–462 enclose the B5 domain; it reads DKKESFNFVW…RFYGYENLVF (76 aa). Asp-440, Asp-446, Glu-449, and Glu-450 together coordinate Mg(2+).

This sequence belongs to the phenylalanyl-tRNA synthetase beta subunit family. Type 1 subfamily. Tetramer of two alpha and two beta subunits. The cofactor is Mg(2+).

It localises to the cytoplasm. It carries out the reaction tRNA(Phe) + L-phenylalanine + ATP = L-phenylalanyl-tRNA(Phe) + AMP + diphosphate + H(+). The protein is Phenylalanine--tRNA ligase beta subunit of Mycoplasmopsis pulmonis (strain UAB CTIP) (Mycoplasma pulmonis).